An 862-amino-acid polypeptide reads, in one-letter code: Linoleate 9S-lipoxygenase 1 (862 aa).

Positions 44–171 (FGAATDIVGG…SYKRDRIFFA (128 aa)) constitute a PLAT domain. One can recognise a Lipoxygenase domain in the interval 174–862 (TYLPNETPAS…FRGIPNSISI (689 aa)). The tract at residues 225 to 257 (KNLARTTLGGSSDFPYPRRGRTGRKSTRKDPKC) is disordered. The span at 242 to 251 (RRGRTGRKST) shows a compositional bias: basic residues. Residues His522, His527, His713, Asn717, and Ile862 each contribute to the Fe cation site.

The protein belongs to the lipoxygenase family. As to quaternary structure, monomer. Fe cation serves as cofactor.

The protein localises to the cytoplasm. The catalysed reaction is (9Z,12Z)-octadecadienoate + O2 = (13S)-hydroperoxy-(9Z,11E)-octadecadienoate. It carries out the reaction (9Z,12Z,15Z)-octadecatrienoate + O2 = (13S)-hydroperoxy-(9Z,11E,15Z)-octadecatrienoate. The enzyme catalyses (9Z,12Z)-octadecadienoate + O2 = (9S)-hydroperoxy-(10E,12Z)-octadecadienoate. The protein operates within lipid metabolism; oxylipin biosynthesis. Its function is as follows. Plant lipoxygenase may be involved in a number of diverse aspects of plant physiology including growth and development, pest resistance, and senescence or responses to wounding. It catalyzes the hydroperoxidation of lipids containing a cis,cis-1,4-pentadiene structure. The protein is Linoleate 9S-lipoxygenase 1 (LOXA) of Phaseolus vulgaris (Kidney bean).